Here is a 433-residue protein sequence, read N- to C-terminus: Signal recognition particle 54 kDa protein (433 aa).

GTP contacts are provided by residues 106 to 113 (GVEGSGKT), 186 to 190 (DTAGR), and 244 to 247 (TKMD).

The protein belongs to the GTP-binding SRP family. SRP54 subfamily. Part of the signal recognition particle protein translocation system, which is composed of SRP and FtsY. Archaeal SRP consists of a 7S RNA molecule of 300 nucleotides and two protein subunits: SRP54 and SRP19.

Its subcellular location is the cytoplasm. The enzyme catalyses GTP + H2O = GDP + phosphate + H(+). Functionally, involved in targeting and insertion of nascent membrane proteins into the cytoplasmic membrane. Binds to the hydrophobic signal sequence of the ribosome-nascent chain (RNC) as it emerges from the ribosomes. The SRP-RNC complex is then targeted to the cytoplasmic membrane where it interacts with the SRP receptor FtsY. This is Signal recognition particle 54 kDa protein from Pyrobaculum arsenaticum (strain DSM 13514 / JCM 11321 / PZ6).